A 526-amino-acid chain; its full sequence is ATP synthase subunit alpha 2 (526 aa).

ATP is bound at residue 171–178 (GDRQTGKT).

The protein belongs to the ATPase alpha/beta chains family. As to quaternary structure, F-type ATPases have 2 components, CF(1) - the catalytic core - and CF(0) - the membrane proton channel. CF(1) has five subunits: alpha(3), beta(3), gamma(1), delta(1), epsilon(1). CF(0) has four main subunits: a(1), b(1), b'(1) and c(9-12).

It localises to the cell inner membrane. It catalyses the reaction ATP + H2O + 4 H(+)(in) = ADP + phosphate + 5 H(+)(out). Functionally, produces ATP from ADP in the presence of a proton gradient across the membrane. The alpha chain is a regulatory subunit. This chain is ATP synthase subunit alpha 2, found in Chlorobium luteolum (strain DSM 273 / BCRC 81028 / 2530) (Pelodictyon luteolum).